Reading from the N-terminus, the 580-residue chain is Cytochrome c oxidase subunit 1 (580 aa).

Residues 1–25 form a disordered region; it reads MTAVAPRVDGHVAPQRPEPTGHARK. A helical transmembrane segment spans residues 43–63; that stretch reads IMYIIMSFSFFFLGGLMALLI. His87 lines the Fe(II)-heme a pocket. A run of 6 helical transmembrane segments spans residues 90-110, 122-142, 171-191, 214-234, 259-279, and 292-312; these read VMLL…VLPL, LNAF…AGFL, MWII…INML, IFVT…AALG, LFWF…FGII, and FGYI…MAVW. Cu cation is bound by residues His265 and Tyr269. Residues 265 to 269 constitute a cross-link (1'-histidyl-3'-tyrosine (His-Tyr)); that stretch reads HPEVY. Positions 314 and 315 each coordinate Cu cation. 2 helical membrane-spanning segments follow: residues 316 to 336 and 360 to 380; these read MFVT…LISV and MIWA…GIML. His398 is a binding site for heme a3. Helical transmembrane passes span 399–419, 434–454, and 477–497; these read FHYT…YFWF, IHFW…HWLG, and ISTI…WNVF. Position 400 (His400) interacts with Fe(II)-heme a.

Belongs to the heme-copper respiratory oxidase family. In terms of assembly, associates with subunits II, III and IV to form cytochrome c oxidase. Cu(2+) serves as cofactor. The cofactor is heme.

It localises to the cell membrane. It carries out the reaction 4 Fe(II)-[cytochrome c] + O2 + 8 H(+)(in) = 4 Fe(III)-[cytochrome c] + 2 H2O + 4 H(+)(out). The protein operates within energy metabolism; oxidative phosphorylation. In terms of biological role, cytochrome c oxidase is the component of the respiratory chain that catalyzes the reduction of oxygen to water. Subunits 1-3 form the functional core of the enzyme complex. CO I is the catalytic subunit of the enzyme. Electrons originating in cytochrome c are transferred via the copper A center of subunit 2 and heme A of subunit 1 to the bimetallic center formed by heme A3 and copper B. This is Cytochrome c oxidase subunit 1 (ctaD) from Corynebacterium efficiens (strain DSM 44549 / YS-314 / AJ 12310 / JCM 11189 / NBRC 100395).